The chain runs to 159 residues: MRRLASLAVALPLLAVVASPALAQDMSPRQSAEAFGVPAVSSSWVNQDGSTMTLVFGAGNSVSGFYVNNAPGFGCQGTPYPLVGLTWGNFIGFTVAWDNATANCNSVTSWTGFAEAAGSDVTIVTDWNLAYQGSSSGEIQQGSDTFTLVNKAMKETPKM.

Positions 1–23 (MRRLASLAVALPLLAVVASPALA) are cleaved as a signal peptide. The Avidin-like domain maps to 36-151 (GVPAVSSSWV…GSDTFTLVNK (116 aa)). Positions 46, 50, 66, 68, and 74 each coordinate biotin. Cysteines 75 and 104 form a disulfide. Biotin contacts are provided by serine 106, threonine 108, and aspartate 144.

Belongs to the avidin/streptavidin family. Exhibits a dynamic oligomeric assembly: the apo form self-assembles mostly into toroid-shaped homooctamers, with a small fraction of homodimers, yet upon biotin binding the intact afifavidin consists solely of the dimer.

Its subcellular location is the secreted. In terms of biological role, the exact role played by afifavidin is still obscure. Forms a strong non-covalent complex with biotin and 2-iminobiotin. This chain is Afifavidin, found in Afifella pfennigii (Rhodobium pfennigii).